Reading from the N-terminus, the 716-residue chain is 1,4-alpha-glucan branching enzyme GlgB (716 aa).

Catalysis depends on D399, which acts as the Nucleophile. Residue E452 is the Proton donor of the active site.

This sequence belongs to the glycosyl hydrolase 13 family. GlgB subfamily. In terms of assembly, monomer.

The enzyme catalyses Transfers a segment of a (1-&gt;4)-alpha-D-glucan chain to a primary hydroxy group in a similar glucan chain.. It participates in glycan biosynthesis; glycogen biosynthesis. Its function is as follows. Catalyzes the formation of the alpha-1,6-glucosidic linkages in glycogen by scission of a 1,4-alpha-linked oligosaccharide from growing alpha-1,4-glucan chains and the subsequent attachment of the oligosaccharide to the alpha-1,6 position. In Rhodopseudomonas palustris (strain ATCC BAA-98 / CGA009), this protein is 1,4-alpha-glucan branching enzyme GlgB.